The primary structure comprises 148 residues: Nucleoside diphosphate kinase (148 aa).

ATP-binding residues include lysine 9, phenylalanine 57, arginine 85, threonine 91, arginine 102, and asparagine 112. Threonine 91 is modified (phosphothreonine). Histidine 115 serves as the catalytic Pros-phosphohistidine intermediate. Serine 122 bears the Phosphoserine mark.

It belongs to the NDK family. As to quaternary structure, homotetramer. Mg(2+) is required as a cofactor.

The protein localises to the cytoplasm. It carries out the reaction a 2'-deoxyribonucleoside 5'-diphosphate + ATP = a 2'-deoxyribonucleoside 5'-triphosphate + ADP. The enzyme catalyses a ribonucleoside 5'-diphosphate + ATP = a ribonucleoside 5'-triphosphate + ADP. Functionally, major role in the synthesis of nucleoside triphosphates other than ATP. The ATP gamma phosphate is transferred to the NDP beta phosphate via a ping-pong mechanism, using a phosphorylated active-site intermediate. This is Nucleoside diphosphate kinase from Bacillus licheniformis (strain ATCC 14580 / DSM 13 / JCM 2505 / CCUG 7422 / NBRC 12200 / NCIMB 9375 / NCTC 10341 / NRRL NRS-1264 / Gibson 46).